A 142-amino-acid chain; its full sequence is Non-specific lipid transfer protein GPI-anchored 34 (142 aa).

Positions 1–22 are cleaved as a signal peptide; it reads MAVAVTAVLFLAVVIAPQWTET. Positions 21-43 are disordered; it reads ETKKPPRPSDTSDTSGTSGRDRR. Positions 29–38 are enriched in low complexity; it reads SDTSDTSGTS. 4 disulfides stabilise this stretch: C46–C85, C57–C69, C70–C106, and C83–C114. N120 carries GPI-anchor amidated asparagine lipidation. A propeptide spans 121–142 (removed in mature form); it reads GGATKKIVASMGLFGVVASLFF.

Belongs to the plant LTP family.

The protein localises to the cell membrane. Its function is as follows. Probable lipid transfer protein. The chain is Non-specific lipid transfer protein GPI-anchored 34 from Arabidopsis thaliana (Mouse-ear cress).